Here is a 215-residue protein sequence, read N- to C-terminus: Cytochrome b6 (215 aa).

A helical membrane pass occupies residues 32–52 (IFYCLGGITLTCFLVQVATGF). A heme c-binding site is contributed by C35. H86 and H100 together coordinate heme b. The next 3 membrane-spanning stretches (helical) occupy residues 90–110 (ASMMVLMMILHVFRVYLTGGF), 116–136 (LTWITGVILAVLTVSFGVTGY), and 186–206 (LHTFVLPLLTAVFMLMHFLMI). Residues H187 and H202 each contribute to the heme b site.

Belongs to the cytochrome b family. PetB subfamily. In terms of assembly, the 4 large subunits of the cytochrome b6-f complex are cytochrome b6, subunit IV (17 kDa polypeptide, PetD), cytochrome f and the Rieske protein, while the 4 small subunits are PetG, PetL, PetM and PetN. The complex functions as a dimer. It depends on heme b as a cofactor. Heme c serves as cofactor.

The protein resides in the plastid. It localises to the chloroplast thylakoid membrane. Its function is as follows. Component of the cytochrome b6-f complex, which mediates electron transfer between photosystem II (PSII) and photosystem I (PSI), cyclic electron flow around PSI, and state transitions. The sequence is that of Cytochrome b6 from Psilotum nudum (Whisk fern).